Here is a 306-residue protein sequence, read N- to C-terminus: Homoserine O-acetyltransferase (306 aa).

Cysteine 142 (acyl-thioester intermediate) is an active-site residue. Residues lysine 163 and serine 194 each coordinate substrate. Residue histidine 237 is the Proton acceptor of the active site. Residue glutamate 239 is part of the active site. Residue arginine 251 participates in substrate binding.

The protein belongs to the MetA family.

The protein resides in the cytoplasm. The enzyme catalyses L-homoserine + acetyl-CoA = O-acetyl-L-homoserine + CoA. It participates in amino-acid biosynthesis; L-methionine biosynthesis via de novo pathway; O-acetyl-L-homoserine from L-homoserine: step 1/1. Functionally, transfers an acetyl group from acetyl-CoA to L-homoserine, forming acetyl-L-homoserine. The protein is Homoserine O-acetyltransferase of Clostridium tetani (strain Massachusetts / E88).